Reading from the N-terminus, the 211-residue chain is Uracil phosphoribosyltransferase (211 aa).

5-phospho-alpha-D-ribose 1-diphosphate-binding positions include arginine 79, arginine 104, and 131 to 139; that span reads DPMLATGGS. Uracil is bound by residues isoleucine 196 and 201 to 203; that span reads GDA. Aspartate 202 is a 5-phospho-alpha-D-ribose 1-diphosphate binding site.

Belongs to the UPRTase family. It depends on Mg(2+) as a cofactor.

It catalyses the reaction UMP + diphosphate = 5-phospho-alpha-D-ribose 1-diphosphate + uracil. It functions in the pathway pyrimidine metabolism; UMP biosynthesis via salvage pathway; UMP from uracil: step 1/1. Allosterically activated by GTP. In terms of biological role, catalyzes the conversion of uracil and 5-phospho-alpha-D-ribose 1-diphosphate (PRPP) to UMP and diphosphate. This chain is Uracil phosphoribosyltransferase, found in Lactococcus lactis subsp. lactis (strain IL1403) (Streptococcus lactis).